A 341-amino-acid chain; its full sequence is Holliday junction branch migration complex subunit RuvB (341 aa).

The large ATPase domain (RuvB-L) stretch occupies residues 1–180; the sequence is MAKSHTLNPE…FGIQLRLDYY (180 aa). ATP-binding residues include Leu-19, Arg-20, Gly-61, Lys-64, Thr-65, Thr-66, Arg-170, Tyr-180, and Arg-217. Thr-65 contacts Mg(2+). The small ATPAse domain (RuvB-S) stretch occupies residues 181–251; the sequence is NDEEMKEIVL…LCLKAFEKMG (71 aa). The tract at residues 254–341 is head domain (RuvB-H); it reads DLGLDGMDRQ…ENHGQDPTLF (88 aa). DNA-binding residues include Arg-309 and Arg-314.

This sequence belongs to the RuvB family. As to quaternary structure, homohexamer. Forms an RuvA(8)-RuvB(12)-Holliday junction (HJ) complex. HJ DNA is sandwiched between 2 RuvA tetramers; dsDNA enters through RuvA and exits via RuvB. An RuvB hexamer assembles on each DNA strand where it exits the tetramer. Each RuvB hexamer is contacted by two RuvA subunits (via domain III) on 2 adjacent RuvB subunits; this complex drives branch migration. In the full resolvosome a probable DNA-RuvA(4)-RuvB(12)-RuvC(2) complex forms which resolves the HJ.

It is found in the cytoplasm. The enzyme catalyses ATP + H2O = ADP + phosphate + H(+). The RuvA-RuvB-RuvC complex processes Holliday junction (HJ) DNA during genetic recombination and DNA repair, while the RuvA-RuvB complex plays an important role in the rescue of blocked DNA replication forks via replication fork reversal (RFR). RuvA specifically binds to HJ cruciform DNA, conferring on it an open structure. The RuvB hexamer acts as an ATP-dependent pump, pulling dsDNA into and through the RuvAB complex. RuvB forms 2 homohexamers on either side of HJ DNA bound by 1 or 2 RuvA tetramers; 4 subunits per hexamer contact DNA at a time. Coordinated motions by a converter formed by DNA-disengaged RuvB subunits stimulates ATP hydrolysis and nucleotide exchange. Immobilization of the converter enables RuvB to convert the ATP-contained energy into a lever motion, pulling 2 nucleotides of DNA out of the RuvA tetramer per ATP hydrolyzed, thus driving DNA branch migration. The RuvB motors rotate together with the DNA substrate, which together with the progressing nucleotide cycle form the mechanistic basis for DNA recombination by continuous HJ branch migration. Branch migration allows RuvC to scan DNA until it finds its consensus sequence, where it cleaves and resolves cruciform DNA. This is Holliday junction branch migration complex subunit RuvB from Leptospira borgpetersenii serovar Hardjo-bovis (strain JB197).